Here is a 1238-residue protein sequence, read N- to C-terminus: Protein translocase subunit SecA 1 (1238 aa).

Residues Gln107, 125–129 (GEGKT), and Asp570 each bind ATP. Residues 1194 to 1220 (AAGSEGRAEGSVDTVRVEEPRIGRNAP) are disordered. Positions 1199–1215 (GRAEGSVDTVRVEEPRI) are enriched in basic and acidic residues. Zn(2+)-binding residues include Cys1221, Cys1223, Cys1232, and Cys1233.

The protein belongs to the SecA family. Monomer and homodimer. Part of the essential Sec protein translocation apparatus which comprises SecA, SecYEG and auxiliary proteins SecDF. Other proteins may also be involved. The cofactor is Zn(2+).

It is found in the cell inner membrane. Its subcellular location is the cytoplasm. It catalyses the reaction ATP + H2O + cellular proteinSide 1 = ADP + phosphate + cellular proteinSide 2.. In terms of biological role, part of the Sec protein translocase complex. Interacts with the SecYEG preprotein conducting channel. Has a central role in coupling the hydrolysis of ATP to the transfer of proteins into and across the cell membrane, serving as an ATP-driven molecular motor driving the stepwise translocation of polypeptide chains across the membrane. This is Protein translocase subunit SecA 1 from Rhodopirellula baltica (strain DSM 10527 / NCIMB 13988 / SH1).